A 345-amino-acid polypeptide reads, in one-letter code: Delta(6)-protoilludene synthase (345 aa).

Positions 84, 220, 224, and 228 each coordinate Mg(2+). Residues 84-88 carry the DDXXD motif motif; the sequence is DEYSD. (2E,6E)-farnesyl diphosphate-binding residues include R309 and Y310.

Belongs to the terpene synthase family. In terms of assembly, monomer. Mg(2+) is required as a cofactor.

It catalyses the reaction (2E,6E)-farnesyl diphosphate = Delta(6)-protoilludene + diphosphate. It participates in secondary metabolite biosynthesis. In terms of biological role, delta(6)-protoilludene synthase, part of the gene cluster that mediates the biosynthesis of melleolides, a range of antifungal and phytotoxic polyketide derivatives composed of an orsellinic acid (OA) moiety esterified to various sesquiterpene alcohols. The first step in melleolides biosynthesis is performed by the delta(6)-protoilludene synthase PRO1 which catalyzes the cyclization of farnesyl diphosphate to protoilludene. The orsellinic acid synthase armB produces OA by condensing acetyl-CoA with 3 malonyl-CoA units in a three-round chain elongation reaction folowed by a C2-C7 ring closure. ArmB further catalyzes the trans-esterification of OA to the various sesquiterpene alcohols resulting from the hydroxylation of protoilludene. The melleolides cluster also includes 5 cytochrome P450 monooxygenases, 4 NAD(+)-dependent oxidoreductases, one flavin-dependent oxidoreductase, and one O-methyltransferase. The cytochrome P450 monooxygenases may be involved in protoilludene hydroxylation to elaborate melleolides with multiple alcohol groups, such as melleolide D, which carries alcohol functionalities at C-4, C-5, C-10, and C-13. The role of the NAD(+)-dependent enzymes remains unknown. Numerous melleolides, including arnamial, show 5'-O-methylation of the aromatic moiety which may be catalyzed by the methyltransferase encoded in the cluster. The flavin-dependent oxidoreductase might represent the dehydrogenase yielding the aldehyde in position 1 of arnamial and other melleolides. Finally, several halogenases, localized outside of the cluster, are able to catalyze the transfer of a single chlorine atom to the melleolide backbone, resulting in a 6'-chloromelleolide product. The polypeptide is Delta(6)-protoilludene synthase (Armillaria gallica (Bulbous honey fungus)).